A 65-amino-acid chain; its full sequence is Ferredoxin-1 (65 aa).

The 4Fe-4S ferredoxin-type domain maps to A2–G30. Residues C10, C13, C16, C20, C39, C42, C51, and C55 each contribute to the [4Fe-4S] cluster site.

[4Fe-4S] cluster serves as cofactor.

Functionally, ferredoxins are iron-sulfur proteins that transfer electrons in a wide variety of metabolic reactions. This ferredoxin probably participates in nitrogen fixation. The polypeptide is Ferredoxin-1 (fdxN) (Rhodobacter capsulatus (Rhodopseudomonas capsulata)).